A 149-amino-acid polypeptide reads, in one-letter code: Putative pre-16S rRNA nuclease (149 aa).

Belongs to the YqgF nuclease family.

It is found in the cytoplasm. In terms of biological role, could be a nuclease involved in processing of the 5'-end of pre-16S rRNA. The sequence is that of Putative pre-16S rRNA nuclease from Heliobacterium modesticaldum (strain ATCC 51547 / Ice1).